The sequence spans 129 residues: UPF0325 protein ESA_03178 (129 aa).

Belongs to the UPF0325 family.

The polypeptide is UPF0325 protein ESA_03178 (Cronobacter sakazakii (strain ATCC BAA-894) (Enterobacter sakazakii)).